A 335-amino-acid chain; its full sequence is Dolichyl-diphosphooligosaccharide--protein glycosyltransferase subunit MAGT1 (335 aa).

Residues 1 to 29 form the signal peptide; the sequence is MASPRWFWSVCAIAAVALLLVSKVPSASA. The Extracellular segment spans residues 30–184; that stretch reads QRKKEMVLSE…DVNIRVIRPP (155 aa). One can recognise a Thioredoxin domain in the interval 47–175; the sequence is WANKRPVIRM…IARWIADRTD (129 aa). N-linked (GlcNAc...) asparagine glycosylation is present at asparagine 71. An intrachain disulfide couples cysteine 87 to cysteine 90. The helical transmembrane segment at 185-205 threads the bilayer; it reads NYAGPLMLGLLLAVIGGLVYL. Over 206-209 the chain is Cytoplasmic; the sequence is RRSN. Residues 210 to 230 traverse the membrane as a helical segment; it reads MEFLFNKTGWAFAALCFVLAM. At 231–270 the chain is on the extracellular side; the sequence is TSGQMWNHIRGPPYAHKNPHTGHVNYIHGSSQAQFVAETH. The helical transmembrane segment at 271 to 291 threads the bilayer; that stretch reads IVLLFNGGVTLGMVLLCEAAT. Over 292 to 300 the chain is Cytoplasmic; sequence SDMDIGKRR. A helical transmembrane segment spans residues 301 to 321; the sequence is MMCIAGIGLVVLFFSWMLSIF. Residues 322-335 are Extracellular-facing; the sequence is RSKYHGYPYSFLMS.

This sequence belongs to the OST3/OST6 family. Accessory component of the STT3B-containing form of the oligosaccharyltransferase (OST) complex. OST exists in two different complex forms which contain common core subunits RPN1, RPN2, OST48, OST4, DAD1 and TMEM258, either STT3A or STT3B as catalytic subunits, and form-specific accessory subunits. OST can form stable complexes with the Sec61 complex or with both the Sec61 and TRAP complexes. The association of TUSC3 or MAGT1 with the STT3B-containing complex seems to be mutually exclusvice. As to expression, expressed at high levels in kidney, colon, heart and liver. Expressed at lower levels in intestine, spleen, brain and lung.

It localises to the cell membrane. It is found in the endoplasmic reticulum. The protein resides in the endoplasmic reticulum membrane. The protein operates within protein modification; protein glycosylation. Its function is as follows. Accessory component of the STT3B-containing form of the N-oligosaccharyl transferase (OST) complex which catalyzes the transfer of a high mannose oligosaccharide from a lipid-linked oligosaccharide donor to an asparagine residue within an Asn-X-Ser/Thr consensus motif in nascent polypeptide chains. Involved in N-glycosylation of STT3B-dependent substrates. Specifically required for the glycosylation of a subset of acceptor sites that are near cysteine residues; in this function seems to act redundantly with TUSC3. In its oxidized form proposed to form transient mixed disulfides with a glycoprotein substrate to facilitate access of STT3B to the unmodified acceptor site. Also has oxidoreductase-independent functions in the STT3B-containing OST complex possibly involving substrate recognition. Could indirectly play a role in Mg(2+) transport in epithelial cells. In Mus musculus (Mouse), this protein is Dolichyl-diphosphooligosaccharide--protein glycosyltransferase subunit MAGT1.